The primary structure comprises 354 residues: Ribosomal RNA large subunit methyltransferase K (354 aa).

It belongs to the methyltransferase superfamily.

Its subcellular location is the cytoplasm. It catalyses the reaction guanosine(2069) in 23S rRNA + S-adenosyl-L-methionine = N(2)-methylguanosine(2069) in 23S rRNA + S-adenosyl-L-homocysteine + H(+). Specifically methylates the guanine in position 2069 (m7G2069) of 23S rRNA. The protein is Ribosomal RNA large subunit methyltransferase K (rlmK) of Neisseria meningitidis serogroup B (strain ATCC BAA-335 / MC58).